We begin with the raw amino-acid sequence, 259 residues long: Phosphoadenosine 5'-phosphosulfate reductase (259 aa).

The Nucleophile; cysteine thiosulfonate intermediate role is filled by Cys-244.

It belongs to the PAPS reductase family. CysH subfamily.

It is found in the cytoplasm. It carries out the reaction [thioredoxin]-disulfide + sulfite + adenosine 3',5'-bisphosphate + 2 H(+) = [thioredoxin]-dithiol + 3'-phosphoadenylyl sulfate. It participates in sulfur metabolism; hydrogen sulfide biosynthesis; sulfite from sulfate: step 3/3. In terms of biological role, catalyzes the formation of sulfite from phosphoadenosine 5'-phosphosulfate (PAPS) using thioredoxin as an electron donor. This Vibrio campbellii (strain ATCC BAA-1116) protein is Phosphoadenosine 5'-phosphosulfate reductase.